A 304-amino-acid chain; its full sequence is MKTTRKCRALLSVGLNLLALLFSTTAFITTYWCEGTQRVPKPNCSKDRRHNCIDYGVNETDPSKVHYSWETGDDRFLFRHFHTGIWYSCEENIHGGGEKCRSFIDLAPASERGVLWLSVVSEVLYIMLLVVGFSLMCLELFHSSNVIDGLKLNAFAAVFTVLSGLLGMVAHMMYTQVFQITVSLGPEDWRPHTWDYGWSFCMAWGSFTCCMAASVTTLNSYTKTVIEFRHKRKLFEQGLREEQTFLDPETFHYFRDRSVQSISSSVDVYPSHGSSHGNSRGKMRSPPAPVDQGDNTESLGEEQC.

Residues 1 to 8 (MKTTRKCR) are Cytoplasmic-facing. Residues 9–29 (ALLSVGLNLLALLFSTTAFIT) traverse the membrane as a helical segment. Over 30 to 112 (TYWCEGTQRV…FIDLAPASER (83 aa)) the chain is Extracellular. Residues 113–133 (GVLWLSVVSEVLYIMLLVVGF) form a helical membrane-spanning segment. Residues 134–153 (SLMCLELFHSSNVIDGLKLN) lie on the Cytoplasmic side of the membrane. The chain crosses the membrane as a helical span at residues 154 to 174 (AFAAVFTVLSGLLGMVAHMMY). At 175 to 197 (TQVFQITVSLGPEDWRPHTWDYG) the chain is on the extracellular side. Residues 198–218 (WSFCMAWGSFTCCMAASVTTL) traverse the membrane as a helical segment. The Cytoplasmic segment spans residues 219-304 (NSYTKTVIEF…NTESLGEEQC (86 aa)). A compositionally biased stretch (polar residues) spans 266–278 (VDVYPSHGSSHGN). Residues 266–304 (VDVYPSHGSSHGNSRGKMRSPPAPVDQGDNTESLGEEQC) form a disordered region.

This sequence belongs to the GSG1 family. As to quaternary structure, component of the AMPAR complex.

The protein localises to the cell membrane. Its subcellular location is the synapse. As a component of the AMPAR complex, modifies AMPA receptor (AMPAR) gating. This is Germ cell-specific gene 1-like protein (gsg1l) from Danio rerio (Zebrafish).